The chain runs to 596 residues: Probable lysosomal cobalamin transporter (596 aa).

10 helical membrane-spanning segments follow: residues 13–33 (IWVAYAVAVALVLLVAIITTF), 45–65 (VSIVAIVSLTSLLATVFLLPV), 99–119 (VVYYTLYSFDALLCLIVIPFA), 150–170 (LGFVFLVLILFLLGFFVPAAG), 201–221 (LLITLGTFLYTLYTGAGLALL), 318–338 (LLGGILLLLLSILVWASMLIT), 353–373 (GYILGHINVFQPVNWIFVQSA), 381–401 (ILMALLVLFFFGSSITGIATI), 425–445 (IATVMLALIILAINYAIAMIV), and 512–532 (VFGAIDFWAQFAFLGVFMVVF). Asparagine 543 carries an N-linked (GlcNAc...) asparagine glycan. The segment at 576-596 (GRAKNRNGYGTGGGEGSNGRG) is disordered. The segment covering 584–596 (YGTGGGEGSNGRG) has biased composition (gly residues).

This sequence belongs to the LIMR family. LMBRD1 subfamily.

The protein resides in the lysosome membrane. In terms of biological role, probable lysosomal cobalamin transporter. Required to export cobalamin from lysosomes allowing its conversion to cofactors. In Podospora anserina (strain S / ATCC MYA-4624 / DSM 980 / FGSC 10383) (Pleurage anserina), this protein is Probable lysosomal cobalamin transporter.